The sequence spans 487 residues: GTPase Der (487 aa).

2 EngA-type G domains span residues Pro3–Met166 and Ile199–Thr372. GTP is bound by residues Gly9–Ser16, Asp56–Ile60, Asn118–Asp121, Gly205–Ser212, Asp252–Val256, and Asn317–Asp320. A KH-like domain is found at Arg373–Asp457.

It belongs to the TRAFAC class TrmE-Era-EngA-EngB-Septin-like GTPase superfamily. EngA (Der) GTPase family. In terms of assembly, associates with the 50S ribosomal subunit.

Functionally, GTPase that plays an essential role in the late steps of ribosome biogenesis. This Shewanella oneidensis (strain ATCC 700550 / JCM 31522 / CIP 106686 / LMG 19005 / NCIMB 14063 / MR-1) protein is GTPase Der.